The following is a 426-amino-acid chain: Serine--tRNA ligase (426 aa).

231 to 233 (TAE) contacts L-serine. Residues 262–264 (RRE) and valine 278 each bind ATP. Residue glutamate 285 participates in L-serine binding. 349-352 (EVSS) lines the ATP pocket. Position 384 (serine 384) interacts with L-serine.

This sequence belongs to the class-II aminoacyl-tRNA synthetase family. Type-1 seryl-tRNA synthetase subfamily. As to quaternary structure, homodimer. The tRNA molecule binds across the dimer.

The protein resides in the cytoplasm. The catalysed reaction is tRNA(Ser) + L-serine + ATP = L-seryl-tRNA(Ser) + AMP + diphosphate + H(+). It catalyses the reaction tRNA(Sec) + L-serine + ATP = L-seryl-tRNA(Sec) + AMP + diphosphate + H(+). It functions in the pathway aminoacyl-tRNA biosynthesis; selenocysteinyl-tRNA(Sec) biosynthesis; L-seryl-tRNA(Sec) from L-serine and tRNA(Sec): step 1/1. Functionally, catalyzes the attachment of serine to tRNA(Ser). Is also able to aminoacylate tRNA(Sec) with serine, to form the misacylated tRNA L-seryl-tRNA(Sec), which will be further converted into selenocysteinyl-tRNA(Sec). The sequence is that of Serine--tRNA ligase from Chlamydia caviae (strain ATCC VR-813 / DSM 19441 / 03DC25 / GPIC) (Chlamydophila caviae).